Here is a 909-residue protein sequence, read N- to C-terminus: Protein translocase subunit SecA (909 aa).

ATP is bound by residues Gln87, 105 to 109, and Asp507; that span reads GEGKT. The disordered stretch occupies residues 857 to 909; it reads DTHSELAEEQPPVAENRENKQQPFVRKNEKVGRNDPCPCGSGKKYKQCHGKLN. The segment covering 871–889 has biased composition (basic and acidic residues); it reads ENRENKQQPFVRKNEKVGR. Zn(2+) is bound by residues Cys893, Cys895, Cys904, and His905. The segment covering 899–909 has biased composition (basic residues); that stretch reads KKYKQCHGKLN.

This sequence belongs to the SecA family. Monomer and homodimer. Part of the essential Sec protein translocation apparatus which comprises SecA, SecYEG and auxiliary proteins SecDF-YajC and YidC. Requires Zn(2+) as cofactor.

The protein resides in the cell inner membrane. It is found in the cytoplasm. The catalysed reaction is ATP + H2O + cellular proteinSide 1 = ADP + phosphate + cellular proteinSide 2.. Its function is as follows. Part of the Sec protein translocase complex. Interacts with the SecYEG preprotein conducting channel. Has a central role in coupling the hydrolysis of ATP to the transfer of proteins into and across the cell membrane, serving both as a receptor for the preprotein-SecB complex and as an ATP-driven molecular motor driving the stepwise translocation of polypeptide chains across the membrane. The protein is Protein translocase subunit SecA of Nitrosomonas europaea (strain ATCC 19718 / CIP 103999 / KCTC 2705 / NBRC 14298).